Here is a 370-residue protein sequence, read N- to C-terminus: (5-formylfuran-3-yl)methyl phosphate transaminase (370 aa).

At lysine 222 the chain carries N6-(pyridoxal phosphate)lysine.

The protein belongs to the class-I pyridoxal-phosphate-dependent aminotransferase family. Homodimer. Requires pyridoxal 5'-phosphate as cofactor.

It localises to the cytoplasm. It catalyses the reaction 4-(hydroxymethyl)-2-furancarboxaldehyde phosphate + L-alanine = [5-(aminomethyl)-3-furyl]methyl phosphate + pyruvate. Its pathway is cofactor biosynthesis; methanofuran biosynthesis. Catalyzes the transamination reaction between 4-(hydroxymethyl)-2-furancarboxaldehyde phosphate (4-HFC-P) and alanine to produce pyruvate and 5-(aminomethyl)-3-furanmethanol phosphate (F1-P), the precursor for the furan moiety in methanofuran. The chain is (5-formylfuran-3-yl)methyl phosphate transaminase from Methanocaldococcus jannaschii (strain ATCC 43067 / DSM 2661 / JAL-1 / JCM 10045 / NBRC 100440) (Methanococcus jannaschii).